The chain runs to 103 residues: L-rhamnose mutarotase (103 aa).

Y18 lines the substrate pocket. H22 (proton donor) is an active-site residue. Substrate-binding positions include Y41 and 76–77 (WW).

It belongs to the rhamnose mutarotase family. Homodimer.

It localises to the cytoplasm. The enzyme catalyses alpha-L-rhamnose = beta-L-rhamnose. The protein operates within carbohydrate metabolism; L-rhamnose metabolism. Its function is as follows. Involved in the anomeric conversion of L-rhamnose. This Enterococcus faecalis (strain ATCC 700802 / V583) protein is L-rhamnose mutarotase.